Here is a 290-residue protein sequence, read N- to C-terminus: BEL1-like homeodomain protein 11 (290 aa).

Residues 20–36 are SR/KY domain; that stretch reads SRYAKAVQCLVEEVIDI. A BELL domain region spans residues 81 to 152; the sequence is ENHEIHIKIT…SLEEAIISQL (72 aa). Positions 202–264 form a DNA-binding region, homeobox; sequence AWKPIRGLPE…NARVRLWKPM (63 aa).

This sequence belongs to the TALE/BELL homeobox family. May form heterodimeric complexes with TALE/KNOX proteins.

The protein localises to the nucleus. The chain is BEL1-like homeodomain protein 11 (BLH11) from Arabidopsis thaliana (Mouse-ear cress).